A 729-amino-acid polypeptide reads, in one-letter code: Phosphoribosylformylglycinamidine synthase subunit PurL (729 aa).

Residue histidine 54 is part of the active site. Residues tyrosine 57 and lysine 96 each contribute to the ATP site. Glutamate 98 lines the Mg(2+) pocket. Substrate contacts are provided by residues 99–102 and arginine 121; that span reads SHNH. Histidine 100 functions as the Proton acceptor in the catalytic mechanism. Aspartate 122 is a binding site for Mg(2+). Residue glutamine 245 coordinates substrate. Aspartate 273 contributes to the Mg(2+) binding site. 317–319 contributes to the substrate binding site; it reads ETQ. ATP-binding residues include aspartate 495 and glycine 532. Asparagine 533 lines the Mg(2+) pocket. Residue serine 535 coordinates substrate.

Belongs to the FGAMS family. In terms of assembly, monomer. Part of the FGAM synthase complex composed of 1 PurL, 1 PurQ and 2 PurS subunits.

It is found in the cytoplasm. The catalysed reaction is N(2)-formyl-N(1)-(5-phospho-beta-D-ribosyl)glycinamide + L-glutamine + ATP + H2O = 2-formamido-N(1)-(5-O-phospho-beta-D-ribosyl)acetamidine + L-glutamate + ADP + phosphate + H(+). The protein operates within purine metabolism; IMP biosynthesis via de novo pathway; 5-amino-1-(5-phospho-D-ribosyl)imidazole from N(2)-formyl-N(1)-(5-phospho-D-ribosyl)glycinamide: step 1/2. Part of the phosphoribosylformylglycinamidine synthase complex involved in the purines biosynthetic pathway. Catalyzes the ATP-dependent conversion of formylglycinamide ribonucleotide (FGAR) and glutamine to yield formylglycinamidine ribonucleotide (FGAM) and glutamate. The FGAM synthase complex is composed of three subunits. PurQ produces an ammonia molecule by converting glutamine to glutamate. PurL transfers the ammonia molecule to FGAR to form FGAM in an ATP-dependent manner. PurS interacts with PurQ and PurL and is thought to assist in the transfer of the ammonia molecule from PurQ to PurL. The chain is Phosphoribosylformylglycinamidine synthase subunit PurL from Staphylococcus aureus (strain Mu3 / ATCC 700698).